The primary structure comprises 80 residues: UPF0270 protein AHA_0994 (80 aa).

The protein belongs to the UPF0270 family.

The sequence is that of UPF0270 protein AHA_0994 from Aeromonas hydrophila subsp. hydrophila (strain ATCC 7966 / DSM 30187 / BCRC 13018 / CCUG 14551 / JCM 1027 / KCTC 2358 / NCIMB 9240 / NCTC 8049).